We begin with the raw amino-acid sequence, 1770 residues long: Probable outer membrane protein PmpC (1770 aa).

An N-terminal signal peptide occupies residues 1–20; it reads MKFMSATAVFAAALSSVTEA. Disordered regions lie at residues 73–109, 264–311, 481–505, 611–818, and 1271–1329; these read LPRKHLSSSSEASPTTEGVSSSSSGETDEKTEEELDN, EDTL…GKGG, PAAPSLTEAESDQTDQTETSDTNSD, ESTP…STTE, and LRII…TSRT. Low complexity predominate over residues 85 to 97; it reads SPTTEGVSSSSSG. Residues 268-285 are compositionally biased toward polar residues; that stretch reads DSTPETEQTESNGNQDGS. Low complexity-rich tracts occupy residues 294-303 and 496-505; these read SESPESTPSP and QTETSDTNSD. 2 stretches are compositionally biased toward polar residues: residues 631–675 and 682–703; these read TEDP…TGNA and QDSTQSNEENTLPNSNIDQSNE. Composition is skewed to low complexity over residues 719-748 and 762-802; these read ESVSSSSESGSSTPQDGGAASSGAPSGDQS and STDS…GDSA. Over residues 1303–1319 the composition is skewed to polar residues; sequence NNDASNQGESANGSSSP. One can recognise an Autotransporter domain in the interval 1477–1770; the sequence is EEVSYNNLWI…MMNCGARMTF (294 aa).

Belongs to the PMP outer membrane protein family.

It is found in the secreted. The protein localises to the cell wall. Its subcellular location is the cell outer membrane. The polypeptide is Probable outer membrane protein PmpC (pmpC) (Chlamydia trachomatis serovar D (strain ATCC VR-885 / DSM 19411 / UW-3/Cx)).